Consider the following 556-residue polypeptide: Arginine--tRNA ligase (556 aa).

The 'HIGH' region motif lies at 132 to 142 (ANPTGDLHLGH).

This sequence belongs to the class-I aminoacyl-tRNA synthetase family. As to quaternary structure, monomer.

It localises to the cytoplasm. The catalysed reaction is tRNA(Arg) + L-arginine + ATP = L-arginyl-tRNA(Arg) + AMP + diphosphate. This is Arginine--tRNA ligase from Listeria monocytogenes serovar 1/2a (strain ATCC BAA-679 / EGD-e).